Reading from the N-terminus, the 295-residue chain is Nucleotide-binding protein LACR_1047 (295 aa).

12-19 (GMSGAGKT) lines the ATP pocket. GTP is bound at residue 63 to 66 (DMRS).

Belongs to the RapZ-like family.

Functionally, displays ATPase and GTPase activities. The chain is Nucleotide-binding protein LACR_1047 from Lactococcus lactis subsp. cremoris (strain SK11).